A 352-amino-acid chain; its full sequence is MTTDIFFNPIWDVRLTDTSLRDGSHHKRHQFTKDEVQAIVAALDAAGVPVIEVTHGDGLGGSSFNYGFSKTPEQELIKLAAETAKDAKIAFLMLPGVGTKEDIKEAQNNGGSICRIATHCTEADVSIQHFGLARELGLETVGFLMMSHTIPPEKLAQQARIMADAGCQCVYVVDSAGALVLEGVRDRVAALVAELGDDAQVGFHGHENLGLGVANSVEAVRAGAKQIDGSCRRFGAGAGNAPVEALIGVFDKIGVKTGIDFFDIADAAEEVVAPAMPAECLLDRNALIMGYSGVYSSFLKHAIRQSERYGVPAHQLLHRAGQRKLIGGQEDQLIDIALEIKREQESGAAAAR.

One can recognise a Pyruvate carboxyltransferase domain in the interval 13–265 (VRLTDTSLRD…KTGIDFFDIA (253 aa)). A substrate-binding site is contributed by 21-22 (RD). D22 is a binding site for Mn(2+). H25 (proton acceptor) is an active-site residue. 2 residues coordinate substrate: S175 and H204. Residues H204 and H206 each contribute to the Mn(2+) site. Residue Y295 participates in substrate binding.

Belongs to the 4-hydroxy-2-oxovalerate aldolase family.

The catalysed reaction is (S)-4-hydroxy-2-oxopentanoate = acetaldehyde + pyruvate. In Mycolicibacterium paratuberculosis (strain ATCC BAA-968 / K-10) (Mycobacterium paratuberculosis), this protein is 4-hydroxy-2-oxovalerate aldolase.